Here is a 593-residue protein sequence, read N- to C-terminus: Protein PSP2 (593 aa).

The segment covering 56 to 65 has biased composition (basic and acidic residues); sequence AGEHQRDGHQ. The interval 56 to 101 is disordered; the sequence is AGEHQRDGHQQHPHGGHGPMNRSRFSNAGPFGGGSMGDFANHHHPL. A phosphoserine mark is found at Ser-150 and Ser-238. 2 disordered regions span residues 227 to 248 and 280 to 593; these read KPFITKTQRSKSNPFGSAKPVD and DSMA…DMPL. Polar residues-rich tracts occupy residues 231–241 and 280–290; these read TKTQRSKSNPF and DSMATTATGSK. Residue Ser-340 is modified to Phosphoserine. The span at 347 to 402 shows a compositional bias: basic and acidic residues; sequence SKPDKSDEFKGGDEQGFEKGGDDKAQLDVSNDKDKGSETDVDKQFTFKNVEREHSM. Residues 408-426 are compositionally biased toward low complexity; that stretch reads NGNHNNNNGNFRGSNRYRG. Omega-N-methylarginine is present on residues Arg-419, Arg-425, and Arg-440. Arg-443 bears the Dimethylated arginine mark. The residue at position 447 (Arg-447) is an Omega-N-methylarginine. Positions 449-477 are enriched in low complexity; the sequence is GSSYNNNNNNTNDNNNNNNNSSSNNNNGS. 2 stretches are compositionally biased toward polar residues: residues 486 to 497 and 505 to 516; these read EEGLTSDSSLDA and FTNSTSNTQQYS. At Ser-522 the chain carries Phosphoserine. Over residues 534–545 the composition is skewed to low complexity; sequence RNNGRGNYNSSG. Residues Arg-538, Arg-551, and Arg-575 each carry the omega-N-methylarginine modification. Gly residues predominate over residues 546-563; the sequence is MNGGSRGRGFGRGRGFGR. The segment covering 578 to 587 has biased composition (low complexity); it reads SGNYSNYNNR.

The protein resides in the cytoplasm. It localises to the P-body. It is found in the stress granule. Functionally, DNA polymerase alpha mutation suppressor. Suppressor of group II intron splicing defects of a mutation in MRS2. May play a role in mitochondrial mRNA splicing. The sequence is that of Protein PSP2 from Saccharomyces cerevisiae (strain ATCC 204508 / S288c) (Baker's yeast).